A 104-amino-acid chain; its full sequence is Phosphoribosyl-ATP pyrophosphatase (104 aa).

The protein belongs to the PRA-PH family.

It is found in the cytoplasm. It catalyses the reaction 1-(5-phospho-beta-D-ribosyl)-ATP + H2O = 1-(5-phospho-beta-D-ribosyl)-5'-AMP + diphosphate + H(+). Its pathway is amino-acid biosynthesis; L-histidine biosynthesis; L-histidine from 5-phospho-alpha-D-ribose 1-diphosphate: step 2/9. The chain is Phosphoribosyl-ATP pyrophosphatase from Streptococcus sanguinis (strain SK36).